The chain runs to 371 residues: Serpentine receptor class delta-1 (371 aa).

Transmembrane regions (helical) follow at residues 31-51, 62-82, 109-129, 148-168, 209-229, 267-287, and 295-315; these read LSEV…YVIF, AVLL…SLLA, CFFC…ILLI, MIVI…FYFW, IPSL…YFII, AIPI…FGII, and ITFR…FIFI. The disordered stretch occupies residues 344 to 371; sequence EKFNQPPKQPTNPAQQSANNDAAKTEKV. The span at 354 to 365 shows a compositional bias: polar residues; that stretch reads TNPAQQSANNDA.

Belongs to the nematode receptor-like protein srd family.

Its subcellular location is the membrane. This Caenorhabditis elegans protein is Serpentine receptor class delta-1 (srd-1).